A 355-amino-acid polypeptide reads, in one-letter code: Ubiquinone biosynthesis protein COQ4 homolog, mitochondrial (355 aa).

Histidine 134, aspartate 135, histidine 138, and glutamate 150 together coordinate Zn(2+).

The protein belongs to the COQ4 family. As to quaternary structure, component of a multi-subunit COQ enzyme complex. Requires Zn(2+) as cofactor.

It is found in the mitochondrion inner membrane. It carries out the reaction a 4-hydroxy-3-methoxy-5-(all-trans-polyprenyl)benzoate + H(+) = a 2-methoxy-6-(all-trans-polyprenyl)phenol + CO2. It functions in the pathway cofactor biosynthesis; ubiquinone biosynthesis. In terms of biological role, lyase that catalyzes the C1-decarboxylation of 4-hydroxy-3-methoxy-5-(all-trans-polyprenyl)benzoic acid into 2-methoxy-6-(all-trans-polyprenyl)phenol during ubiquinone biosynthesis. In Plasmodium knowlesi (strain H), this protein is Ubiquinone biosynthesis protein COQ4 homolog, mitochondrial.